The sequence spans 309 residues: Ribosomal RNA small subunit methyltransferase H (309 aa).

Residues 36 to 38 (AGH), D55, F81, D102, and Q109 contribute to the S-adenosyl-L-methionine site.

The protein belongs to the methyltransferase superfamily. RsmH family.

Its subcellular location is the cytoplasm. The catalysed reaction is cytidine(1402) in 16S rRNA + S-adenosyl-L-methionine = N(4)-methylcytidine(1402) in 16S rRNA + S-adenosyl-L-homocysteine + H(+). In terms of biological role, specifically methylates the N4 position of cytidine in position 1402 (C1402) of 16S rRNA. In Mycoplasma genitalium (strain ATCC 33530 / DSM 19775 / NCTC 10195 / G37) (Mycoplasmoides genitalium), this protein is Ribosomal RNA small subunit methyltransferase H.